The chain runs to 223 residues: Ribonuclease 3 (223 aa).

In terms of domain architecture, RNase III spans 3-125; sequence LERLQKKLGY…IIAAIYLDAG (123 aa). Glutamate 38 serves as a coordination point for Mg(2+). The active site involves aspartate 42. Mg(2+) is bound by residues aspartate 111 and glutamate 114. Glutamate 114 is a catalytic residue. In terms of domain architecture, DRBM spans 152–222; it reads DPKTRLQEFL…AEQVLAKLTT (71 aa).

It belongs to the ribonuclease III family. Homodimer. Mg(2+) is required as a cofactor.

The protein resides in the cytoplasm. It catalyses the reaction Endonucleolytic cleavage to 5'-phosphomonoester.. In terms of biological role, digests double-stranded RNA. Involved in the processing of primary rRNA transcript to yield the immediate precursors to the large and small rRNAs (23S and 16S). Processes some mRNAs, and tRNAs when they are encoded in the rRNA operon. Processes pre-crRNA and tracrRNA of type II CRISPR loci if present in the organism. This is Ribonuclease 3 from Actinobacillus pleuropneumoniae serotype 3 (strain JL03).